The following is a 431-amino-acid chain: Histidinol dehydrogenase (431 aa).

Tyr130, Gln192, and Asn215 together coordinate NAD(+). Residues Ser238, Gln260, and His263 each contribute to the substrate site. Gln260 and His263 together coordinate Zn(2+). Residues Glu328 and His329 each act as proton acceptor in the active site. Positions 329, 362, 416, and 421 each coordinate substrate. Asp362 provides a ligand contact to Zn(2+). His421 is a Zn(2+) binding site.

This sequence belongs to the histidinol dehydrogenase family. Zn(2+) serves as cofactor.

The catalysed reaction is L-histidinol + 2 NAD(+) + H2O = L-histidine + 2 NADH + 3 H(+). It participates in amino-acid biosynthesis; L-histidine biosynthesis; L-histidine from 5-phospho-alpha-D-ribose 1-diphosphate: step 9/9. Catalyzes the sequential NAD-dependent oxidations of L-histidinol to L-histidinaldehyde and then to L-histidine. In Thermosynechococcus vestitus (strain NIES-2133 / IAM M-273 / BP-1), this protein is Histidinol dehydrogenase.